A 424-amino-acid chain; its full sequence is Virion nicking-joining enzyme (424 aa).

Belongs to the orthopoxvirus OPG042 family.

The protein resides in the virion. In terms of biological role, DNA nicking enzyme that cleaves extruded cruciform DNA at its tip. Probably nicks viral hairpins. The protein is Virion nicking-joining enzyme (OPG042) of Cynomys gunnisoni (Gunnison's prairie dog).